Consider the following 302-residue polypeptide: Acetylglutamate kinase (302 aa).

Substrate-binding positions include 67-68 (GG), Arg-89, and Asn-189.

Belongs to the acetylglutamate kinase family. ArgB subfamily.

It is found in the cytoplasm. It catalyses the reaction N-acetyl-L-glutamate + ATP = N-acetyl-L-glutamyl 5-phosphate + ADP. It participates in amino-acid biosynthesis; L-arginine biosynthesis; N(2)-acetyl-L-ornithine from L-glutamate: step 2/4. Functionally, catalyzes the ATP-dependent phosphorylation of N-acetyl-L-glutamate. The polypeptide is Acetylglutamate kinase (Streptomyces clavuligerus).